Reading from the N-terminus, the 271-residue chain is 5-deoxy-glucuronate isomerase (271 aa).

The protein belongs to the isomerase IolB family.

The catalysed reaction is 5-deoxy-D-glucuronate = 5-dehydro-2-deoxy-D-gluconate. It participates in polyol metabolism; myo-inositol degradation into acetyl-CoA; acetyl-CoA from myo-inositol: step 4/7. Functionally, involved in the isomerization of 5-deoxy-glucuronate (5DG) to 5-dehydro-2-deoxy-D-gluconate (DKG or 2-deoxy-5-keto-D-gluconate). This is 5-deoxy-glucuronate isomerase from Bacillus velezensis (strain DSM 23117 / BGSC 10A6 / LMG 26770 / FZB42) (Bacillus amyloliquefaciens subsp. plantarum).